The primary structure comprises 164 residues: UPF0178 protein BRADO3147 (164 aa).

Belongs to the UPF0178 family.

The polypeptide is UPF0178 protein BRADO3147 (Bradyrhizobium sp. (strain ORS 278)).